The sequence spans 410 residues: MKMEQALNITSEIGKLQTVLVKRPGSELENITPEYLESLLFDDIPYLKMMQKEHDFFAKTMKDSNIEVLYLEKLAAEALREANNKESFLTKMIKESNQMDESALYVRDYLMSFDEEEMIRKLMSGLKKSEIPERKKKHLNEMMDEQYPFFLDPLPNLYFTRDPAAVIGNGVTINRMFQPARRRESMFIELILKHHPRFSNQEIPVWSGRGEPFSLEGGDELVLNEETVLVGVSERTDARAVERLAESLFSRSPKIKRVLAVEIPETRSFMHLDTVFTMVNFAQFTIHPAIQNQQGELNIYILEKSENGLEITPRRDFQRVIAEVLDEPEIDFIPCGGEDVIVSAREQWNDGANTLAIAPGEVITYDRNQVSNDLLRSAGIKVHEVISSELSRGRGGPRCMTMPLVRENLK.

Cys399 functions as the Amidino-cysteine intermediate in the catalytic mechanism.

The protein belongs to the arginine deiminase family.

It is found in the cytoplasm. It catalyses the reaction L-arginine + H2O = L-citrulline + NH4(+). It participates in amino-acid degradation; L-arginine degradation via ADI pathway; carbamoyl phosphate from L-arginine: step 1/2. This chain is Arginine deiminase, found in Listeria monocytogenes serotype 4b (strain F2365).